A 178-amino-acid chain; its full sequence is Histone H3-like centromeric protein CENH3 (178 aa).

The disordered stretch occupies residues 1 to 81; it reads MARTKHRVTR…GSQKKSYRYR (81 aa). Position 5 is an N6,N6,N6-trimethyllysine; alternate (Lys5). Lys5 bears the N6,N6-dimethyllysine; alternate mark. Lys5 is subject to N6-methyllysine; alternate. A Phosphoserine modification is found at Ser11. Residues 16–36 are compositionally biased toward low complexity; sequence QTDAAGASSSQAAGPTTTPTR. Over residues 43 to 56 the composition is skewed to polar residues; sequence DNTQQTNPTTSPAT. Lys63 and Lys75 each carry N6-methyllysine; alternate. Position 63 is an N6-acetyllysine; alternate (Lys63). An N6,N6,N6-trimethyllysine; alternate modification is found at Lys75. Lys75 bears the N6,N6-dimethyllysine; alternate mark.

The protein belongs to the histone H3 family. As to quaternary structure, forms a nucleosome-like histone octamer containing two molecules each of H2A, H2B, CENH3 and H4 assembled in one CENH3-H4 heterotetramer and two H2A-H2B heterodimers. Interacts with ORTH2.

It is found in the chromosome. The protein localises to the centromere. Its subcellular location is the kinetochore. Functionally, histone H3-like variant which exclusively replaces conventional H3 in the nucleosome core of centromeric chromatin at the inner plate of the kinetochore. Required for recruitment and assembly of kinetochore proteins, mitotic progression and chromosome segregation. May serve as an epigenetic mark that propagates centromere identity through replication and cell division. This chain is Histone H3-like centromeric protein CENH3, found in Arabidopsis thaliana (Mouse-ear cress).